A 153-amino-acid chain; its full sequence is Small ribosomal subunit protein uS11 (153 aa).

Belongs to the universal ribosomal protein uS11 family.

The polypeptide is Small ribosomal subunit protein uS11 (RPS14) (Chlamydomonas reinhardtii (Chlamydomonas smithii)).